Reading from the N-terminus, the 103-residue chain is Spherulin-3A (103 aa).

An N-terminal arm region spans residues 1–13; it reads MSVCKGVSGNPAK. Beta/gamma crystallin 'Greek key' domains lie at 14–55 and 57–99; these read GEVF…KVGP and TKAF…IVAT.

This sequence belongs to the beta/gamma-crystallin family.

The protein localises to the cytoplasm. In terms of biological role, structural protein. The chain is Spherulin-3A from Physarum polycephalum (Slime mold).